The primary structure comprises 375 residues: 23S rRNA (uracil(747)-C(5))-methyltransferase RlmC (375 aa).

The [4Fe-4S] cluster site is built by cysteine 3, cysteine 11, cysteine 14, and cysteine 87. Glutamine 212, phenylalanine 241, glutamate 262, and asparagine 307 together coordinate S-adenosyl-L-methionine. Cysteine 334 (nucleophile) is an active-site residue.

This sequence belongs to the class I-like SAM-binding methyltransferase superfamily. RNA M5U methyltransferase family. RlmC subfamily.

It catalyses the reaction uridine(747) in 23S rRNA + S-adenosyl-L-methionine = 5-methyluridine(747) in 23S rRNA + S-adenosyl-L-homocysteine + H(+). Its function is as follows. Catalyzes the formation of 5-methyl-uridine at position 747 (m5U747) in 23S rRNA. This is 23S rRNA (uracil(747)-C(5))-methyltransferase RlmC from Shigella boydii serotype 4 (strain Sb227).